A 338-amino-acid polypeptide reads, in one-letter code: Ketol-acid reductoisomerase (NADP(+)) (338 aa).

In terms of domain architecture, KARI N-terminal Rossmann spans 1–181 (MKVFYDKDAD…GGGRAGIIET (181 aa)). Residues 24–27 (YGSQ), R47, and S52 each bind NADP(+). Residue H107 is part of the active site. Position 133 (G133) interacts with NADP(+). The region spanning 182–327 (NFREETETDL…SKLRAMMPWI (146 aa)) is the KARI C-terminal knotted domain. Positions 190, 194, 226, and 230 each coordinate Mg(2+). S251 serves as a coordination point for substrate.

The protein belongs to the ketol-acid reductoisomerase family. Mg(2+) is required as a cofactor.

It carries out the reaction (2R)-2,3-dihydroxy-3-methylbutanoate + NADP(+) = (2S)-2-acetolactate + NADPH + H(+). The catalysed reaction is (2R,3R)-2,3-dihydroxy-3-methylpentanoate + NADP(+) = (S)-2-ethyl-2-hydroxy-3-oxobutanoate + NADPH + H(+). It functions in the pathway amino-acid biosynthesis; L-isoleucine biosynthesis; L-isoleucine from 2-oxobutanoate: step 2/4. The protein operates within amino-acid biosynthesis; L-valine biosynthesis; L-valine from pyruvate: step 2/4. Its function is as follows. Involved in the biosynthesis of branched-chain amino acids (BCAA). Catalyzes an alkyl-migration followed by a ketol-acid reduction of (S)-2-acetolactate (S2AL) to yield (R)-2,3-dihydroxy-isovalerate. In the isomerase reaction, S2AL is rearranged via a Mg-dependent methyl migration to produce 3-hydroxy-3-methyl-2-ketobutyrate (HMKB). In the reductase reaction, this 2-ketoacid undergoes a metal-dependent reduction by NADPH to yield (R)-2,3-dihydroxy-isovalerate. This Paraburkholderia xenovorans (strain LB400) protein is Ketol-acid reductoisomerase (NADP(+)).